We begin with the raw amino-acid sequence, 243 residues long: Ubiquinone/menaquinone biosynthesis C-methyltransferase UbiE (243 aa).

Residues Thr69, Asp90, and 116–117 (DA) each bind S-adenosyl-L-methionine.

It belongs to the class I-like SAM-binding methyltransferase superfamily. MenG/UbiE family.

The enzyme catalyses a 2-demethylmenaquinol + S-adenosyl-L-methionine = a menaquinol + S-adenosyl-L-homocysteine + H(+). It catalyses the reaction a 2-methoxy-6-(all-trans-polyprenyl)benzene-1,4-diol + S-adenosyl-L-methionine = a 5-methoxy-2-methyl-3-(all-trans-polyprenyl)benzene-1,4-diol + S-adenosyl-L-homocysteine + H(+). It functions in the pathway quinol/quinone metabolism; menaquinone biosynthesis; menaquinol from 1,4-dihydroxy-2-naphthoate: step 2/2. The protein operates within cofactor biosynthesis; ubiquinone biosynthesis. In terms of biological role, methyltransferase required for the conversion of demethylmenaquinol (DMKH2) to menaquinol (MKH2) and the conversion of 2-polyprenyl-6-methoxy-1,4-benzoquinol (DDMQH2) to 2-polyprenyl-3-methyl-6-methoxy-1,4-benzoquinol (DMQH2). The polypeptide is Ubiquinone/menaquinone biosynthesis C-methyltransferase UbiE (Paraburkholderia phymatum (strain DSM 17167 / CIP 108236 / LMG 21445 / STM815) (Burkholderia phymatum)).